Here is a 108-residue protein sequence, read N- to C-terminus: UPF0102 protein Sbal_4100 (108 aa).

The protein belongs to the UPF0102 family.

The polypeptide is UPF0102 protein Sbal_4100 (Shewanella baltica (strain OS155 / ATCC BAA-1091)).